The chain runs to 435 residues: Xylose isomerase (435 aa).

Active-site residues include H100 and D103. E231, E267, H270, D295, D306, D308, and D338 together coordinate Mg(2+).

It belongs to the xylose isomerase family. As to quaternary structure, homotetramer. Requires Mg(2+) as cofactor.

The protein localises to the cytoplasm. It catalyses the reaction alpha-D-xylose = alpha-D-xylulofuranose. The sequence is that of Xylose isomerase from Brucella suis (strain ATCC 23445 / NCTC 10510).